A 142-amino-acid polypeptide reads, in one-letter code: Peptide methionine sulfoxide reductase MsrB (142 aa).

The MsrB domain maps to 2 to 125; it reads IKKNKNDLNE…NSAAVQFIPY (124 aa). The Nucleophile role is filled by Cys-114.

Belongs to the MsrB Met sulfoxide reductase family.

The catalysed reaction is L-methionyl-[protein] + [thioredoxin]-disulfide + H2O = L-methionyl-(R)-S-oxide-[protein] + [thioredoxin]-dithiol. The protein is Peptide methionine sulfoxide reductase MsrB of Staphylococcus saprophyticus subsp. saprophyticus (strain ATCC 15305 / DSM 20229 / NCIMB 8711 / NCTC 7292 / S-41).